Consider the following 245-residue polypeptide: MRVDGREVRELRHVHIHTNYLKHPEGSVLIEVGDTKVICSATVEERVPPFMRGEGKGWVTAEYAMIPRATEQRTIRESSKGKVTGRTMEIQRLIGRALRAVVDLEVLGERTVWIDCDVIQADGGTRTASITGAYVAMVLAFEKLLQAEKVTKIPVKDYLAATSVGILEEQGVVLDLNYAEDSKADVDMNVIMTGKGHFVEVQGTGEEATFSRAQLNELLDAAEHGILQLIEKQKEALGDIVSHIE.

Residues Arg86 and 124–126 (GTR) each bind phosphate.

This sequence belongs to the RNase PH family. Homohexameric ring arranged as a trimer of dimers.

It catalyses the reaction tRNA(n+1) + phosphate = tRNA(n) + a ribonucleoside 5'-diphosphate. Phosphorolytic 3'-5' exoribonuclease that plays an important role in tRNA 3'-end maturation. Removes nucleotide residues following the 3'-CCA terminus of tRNAs; can also add nucleotides to the ends of RNA molecules by using nucleoside diphosphates as substrates, but this may not be physiologically important. Probably plays a role in initiation of 16S rRNA degradation (leading to ribosome degradation) during starvation. This chain is Ribonuclease PH, found in Bacillus cytotoxicus (strain DSM 22905 / CIP 110041 / 391-98 / NVH 391-98).